The primary structure comprises 1063 residues: NAD-specific glutamate dehydrogenase (1063 aa).

This sequence belongs to the Glu/Leu/Phe/Val dehydrogenases family. Highly divergent. Homotetramer.

It carries out the reaction L-glutamate + NAD(+) + H2O = 2-oxoglutarate + NH4(+) + NADH + H(+). With respect to regulation, allosterically activated by NADP(+). This is NAD-specific glutamate dehydrogenase from Achlya klebsiana.